Here is a 497-residue protein sequence, read N- to C-terminus: Nuclear pore complex protein npp-16 (497 aa).

Disordered regions lie at residues 76–95, 210–308, and 359–379; these read VPRR…APRK, TKKS…SAPK, and MENQ…GEYV. Basic and acidic residues-rich tracts occupy residues 231 to 240 and 250 to 260; these read KDGDKPKETP and KPAEPSEEPKA. Residues 390 to 497 are ranBD1; that stretch reads EPDAVLSSKV…FTDKILEVAV (108 aa).

Interacts with importin beta imb-1. Interacts with DNA-directed RNA polymerase III subunit rpc-1. Interacts with TATA-box-binding protein tbp-1. Interacts with GTF3C5 homolog tftc-5. Interacts with GTF3C3 homolog tftc-3.

Its subcellular location is the nucleus. It localises to the nuclear pore complex. The protein localises to the nucleus membrane. Component of the nuclear pore complex. Plays a direct role in nuclear protein import. Required for anoxia-induced prophase arrest; may function in concert with cdk-1 to arrest prophase blastomeres in response to anoxia. The sequence is that of Nuclear pore complex protein npp-16 from Caenorhabditis elegans.